A 437-amino-acid chain; its full sequence is uncharacterized protein (437 aa).

Positions 63–87 (PSSANVSFQNSDDNLSTSRGRSASP) are enriched in polar residues. 3 disordered regions span residues 63–97 (PSSANVSFQNSDDNLSTSRGRSASPTPIRKFSNFP), 112–147 (VKKDQQTRNQLPPMKRLNSEEEEEQQGKTKTTKKET), and 346–437 (PKNA…YSIW). Polar residues predominate over residues 399–409 (EALSPSKSNPD). Residues 425 to 437 (KKPSSSSSNYSIW) are compositionally biased toward low complexity.

This is an uncharacterized protein from Caenorhabditis elegans.